Reading from the N-terminus, the 188-residue chain is C-type lectin domain family 5 member A (188 aa).

Topologically, residues 1–4 are cytoplasmic; sequence MNWH. The chain crosses the membrane as a helical; Signal-anchor for type II membrane protein span at residues 5-27; the sequence is MIISGLIVVVLKVVGMTLFLLYF. Residues 28–188 are Extracellular-facing; that stretch reads PQIFNKSNDG…YRRICEKNAK (161 aa). N32 is a glycosylation site (N-linked (GlcNAc...) asparagine). A disulfide bridge links C71 with C82. A C-type lectin domain is found at 78–184; it reads YQARCFFLST…CDISYRRICE (107 aa). N-linked (GlcNAc...) asparagine glycans are attached at residues N93, N144, and N151. Cystine bridges form between C99–C183 and C161–C175.

In terms of assembly, monomer. Homodimer. The majority of CLEC5A is expressed as a monomeric form on macrophages. Interacts with TYROBP/DAP12. The interaction with TYROBP is required for CLEC5A cell surface expression. Interacts with HCST/DAP10. Forms a CLEC5A/TYROBP/HCST trimolecular complex depending almost solely on TYROBP. (Microbial infection) Interacts with dengue virus envelope protein E. In terms of processing, N-glycosylated. Contains sialic acid residues. As to expression, highly expressed in bone marrow with lower levels in synovium, lung and bronchus. Expressed in peripheral blood monocytes and in the monocyte/macrophage cell lines U-937 and Mono-Mac-6, but not in cell lines of other origins. Expression is down-regulated when monocytes differentiate into dendritic cells.

The protein resides in the cell membrane. Functionally, functions as a positive regulator of osteoclastogenesis. Cell surface receptor that signals via TYROBP. Regulates inflammatory responses. Its function is as follows. (Microbial infection) Critical macrophage receptor for dengue virus serotypes 1-4. The binding of dengue virus to CLEC5A triggers signaling through the phosphorylation of TYROBP. This interaction does not result in viral entry, but stimulates pro-inflammatory cytokine release. The chain is C-type lectin domain family 5 member A (CLEC5A) from Homo sapiens (Human).